The sequence spans 1940 residues: Protein ORF1940 (1940 aa).

4 TPR repeats span residues 119 to 153 (IKACSNAQCSPETVESNFQEAIRDYEAASSIALQY), 155 to 186 (FQSLAEQLSDAVNQLKTALSNYEKTVATLQQI), 480 to 513 (RLPDIRIGAIDAAKEKIGDLMSDFKEKISIGLHG), and 617 to 652 (GKSMGDKTVLTADYMEGEVLGLIKNYEADVKISPTS). Disordered stretches follow at residues 1160–1239 (PSKV…PGAV) and 1519–1571 (KGPS…TVTS). A compositionally biased stretch (low complexity) spans 1164 to 1185 (QNTTQPSATQNTTTQPTAQNTS). Residues 1186–1200 (LPGATQNTTLPTPSK) are compositionally biased toward polar residues. Composition is skewed to low complexity over residues 1201–1235 (VQNTTQPSTTPNTTLSTPSTTPNTTTQPTVQNTSL), 1521–1539 (PSTTQNTTQPSTTPNMTPP), and 1561–1571 (TPGSGSQTVTS). The stretch at 1691–1724 (KDLNKSVGTSVVEEAKYNSTLQTYLAGLGIKDLN) is one TPR 5 repeat. Residues 1862 to 1940 (TTTHHITPPP…AEQAEQVLLI (79 aa)) are disordered. Residues 1868-1883 (TPPPPPPPPPPPPPPK) are compositionally biased toward pro residues. Over residues 1884–1894 (TQTITTTTQIT) the composition is skewed to low complexity. Pro residues predominate over residues 1895–1912 (PPSPPPTPPPPPPPPKSP).

The protein is Protein ORF1940 of Acidianus convivator (ATV).